The sequence spans 527 residues: Transcriptional regulator ATRX (527 aa).

The interval glycine 1–arginine 527 is disordered. A compositionally biased stretch (polar residues) spans arginine 14 to glycine 23. The span at proline 27 to lysine 46 shows a compositional bias: basic and acidic residues. A compositionally biased stretch (basic residues) spans glutamate 47–lysine 59. Basic and acidic residues predominate over residues valine 60–glutamine 84. Phosphoserine is present on residues serine 62 and serine 74. The segment covering glycine 85–lysine 94 has biased composition (basic residues). 4 stretches are compositionally biased toward basic and acidic residues: residues lysine 95–glutamate 122, asparagine 136–lysine 145, aspartate 152–glutamine 194, and lysine 204–lysine 250. Lysine 105 is covalently cross-linked (Glycyl lysine isopeptide (Lys-Gly) (interchain with G-Cter in SUMO2)). Residues serine 112, serine 113, and serine 114 each carry the phosphoserine modification. Serine 162 bears the Phosphoserine mark. A Citrulline modification is found at arginine 184. Residues lysine 267 to arginine 297 show a composition bias toward basic residues. Positions leucine 290 to serine 427 are interaction with DAXX. A phosphoserine mark is found at serine 345, serine 346, and serine 354. Basic and acidic residues predominate over residues proline 368–lysine 382. Over residues serine 387 to lysine 398 the composition is skewed to acidic residues. A compositionally biased stretch (basic and acidic residues) spans glutamate 399–glutamate 410. Phosphoserine is present on residues serine 423, serine 425, and serine 427. Basic residues predominate over residues proline 435–leucine 446. 2 positions are modified to phosphoserine: serine 449 and serine 453. Composition is skewed to basic and acidic residues over residues glycine 454–glycine 469 and lysine 509–arginine 518.

It belongs to the SNF2/RAD54 helicase family. Interacts with DAXX to form the chromatin remodeling complex ATRX:DAXX. Probably binds EZH2. Binds annexin V in a calcium and phosphatidylcholine/phosphatidylserine-dependent manner. Interacts directly with CBX5 via the PxVxL motif. Interacts with RAD50, MRE11 and NBN; indicative for an association with the MRN complex. Interacts with histone MACROH2A1. Interacts with histone H3 peptides methylated at 'Lys-10' with preferences H3K9me3 &gt; H3K9me2 &gt; H3K9me1. Interacts with histone H3 peptides unmethylated at 'Lys-5' (H3K4me0). Interacts with MECP2, SMC1 and SMC3. Interacts with SETDB1, TRIM28 and ZNF274. Post-translationally, citrullinated by PADI4.

It localises to the nucleus. It is found in the chromosome. Its subcellular location is the telomere. The protein resides in the PML body. It catalyses the reaction ATP + H2O = ADP + phosphate + H(+). In terms of biological role, involved in transcriptional regulation and chromatin remodeling. Facilitates DNA replication in multiple cellular environments and is required for efficient replication of a subset of genomic loci. Binds to DNA tandem repeat sequences in both telomeres and euchromatin and in vitro binds DNA quadruplex structures. May help stabilizing G-rich regions into regular chromatin structures by remodeling G4 DNA and incorporating H3.3-containing nucleosomes. Catalytic component of the chromatin remodeling complex ATRX:DAXX which has ATP-dependent DNA translocase activity and catalyzes the replication-independent deposition of histone H3.3 in pericentric DNA repeats outside S-phase and telomeres, and the in vitro remodeling of H3.3-containing nucleosomes. Its heterochromatin targeting is proposed to involve a combinatorial readout of histone H3 modifications (specifically methylation states of H3K9 and H3K4) and association with CBX5. Involved in maintaining telomere structural integrity in embryonic stem cells probably implying recruitment of CBX5 to telomeres. May be involved in transcriptional regulation of telomeric repeat-containing RNA (TERRA). Acts as a negative regulator of chromatin incorporation of transcriptionally repressive histone MACROH2A1, particularily at telomeres. Participates in the allele-specific gene expression at the imprinted IGF2/H19 gene locus. On the maternal allele, required for the chromatin occupancy of SMC1 and CTCTF within the H19 imprinting control region (ICR) and involved in esatblishment of histone tails modifications in the ICR. Binds to zinc-finger coding genes with atypical chromatin signatures and regulates its H3K9me3 levels. Forms a complex with ZNF274, TRIM28 and SETDB1 to facilitate the deposition and maintenance of H3K9me3 at the 3' exons of zinc-finger genes. This is Transcriptional regulator ATRX (Atrx) from Rattus norvegicus (Rat).